The sequence spans 257 residues: Pyridoxine 5'-phosphate synthase (257 aa).

N16 serves as a coordination point for 3-amino-2-oxopropyl phosphate. Position 18–19 (18–19 (DH)) interacts with 1-deoxy-D-xylulose 5-phosphate. R27 is a 3-amino-2-oxopropyl phosphate binding site. Residue H52 is the Proton acceptor of the active site. 2 residues coordinate 1-deoxy-D-xylulose 5-phosphate: R54 and H59. E79 serves as the catalytic Proton acceptor. T109 is a binding site for 1-deoxy-D-xylulose 5-phosphate. Residue H200 is the Proton donor of the active site. 3-amino-2-oxopropyl phosphate-binding positions include G201 and 222–223 (GH).

Belongs to the PNP synthase family. As to quaternary structure, homooctamer; tetramer of dimers.

The protein localises to the cytoplasm. The enzyme catalyses 3-amino-2-oxopropyl phosphate + 1-deoxy-D-xylulose 5-phosphate = pyridoxine 5'-phosphate + phosphate + 2 H2O + H(+). It participates in cofactor biosynthesis; pyridoxine 5'-phosphate biosynthesis; pyridoxine 5'-phosphate from D-erythrose 4-phosphate: step 5/5. In terms of biological role, catalyzes the complicated ring closure reaction between the two acyclic compounds 1-deoxy-D-xylulose-5-phosphate (DXP) and 3-amino-2-oxopropyl phosphate (1-amino-acetone-3-phosphate or AAP) to form pyridoxine 5'-phosphate (PNP) and inorganic phosphate. This chain is Pyridoxine 5'-phosphate synthase, found in Burkholderia pseudomallei (strain 1710b).